A 200-amino-acid polypeptide reads, in one-letter code: MSLIRELLRAIRITLIFWLITAIIYPLAILVVGQGLFPYQANGSIMQNIEAQPIGSALIGQVFASEQYFHSRPSASRYSQGRRARPTGISGGSNLAPSNPALLNRIIEEANQLREENIQPIEDLIYSSGSGLDPHISIQAASQQIERVARARNVQPDEILRLMNKYTDGRFLWIFGEPGVNVLRLNYALDLQDFNNQQNR.

A helical transmembrane segment spans residues 13–33 (ITLIFWLITAIIYPLAILVVG).

The protein belongs to the KdpC family. In terms of assembly, the system is composed of three essential subunits: KdpA, KdpB and KdpC.

It is found in the cell membrane. Its function is as follows. Part of the high-affinity ATP-driven potassium transport (or Kdp) system, which catalyzes the hydrolysis of ATP coupled with the electrogenic transport of potassium into the cytoplasm. This subunit acts as a catalytic chaperone that increases the ATP-binding affinity of the ATP-hydrolyzing subunit KdpB by the formation of a transient KdpB/KdpC/ATP ternary complex. The polypeptide is Potassium-transporting ATPase KdpC subunit (Anabaena sp. (strain L31)).